A 332-amino-acid chain; its full sequence is Super small secreted glycoprotein (332 aa).

The first 33 residues, 1–33 (MGSGYQLLQLPRERFRKTSFLVWVIILFQRAIS), serve as a signal peptide directing secretion. Asn-41 is a glycosylation site (N-linked (GlcNAc...) asparagine; by host). Intrachain disulfides connect Cys-109-Cys-136 and Cys-122-Cys-148. N-linked (GlcNAc...) asparagine; by host glycosylation is found at Asn-205, Asn-239, Asn-258, and Asn-269.

It belongs to the filoviruses glycoprotein family.

It is found in the secreted. This chain is Super small secreted glycoprotein (GP), found in Homo sapiens (Human).